Here is a 426-residue protein sequence, read N- to C-terminus: MNEIKKRCSFCNKEESLDNPIINSGITPDVYICNYCLIVGSEILTGYLNKNPQQDQEAIDIKTPSPKELKAKLDEYVIGQDEAKRVFSVAVYNHYKRIKANSLSEEEMPNPILQDDVELSKSNILLIGPTGSGKTLMAQTLARFLDIPIAISDATSLTEAGYVGEDVENILTRLLQAADGDVKKAEKGIVFIDEIDKISRLSENRSITRDVSGEGVQQALLKIIEGSVVNIPPKGGRKHPNQEFVQINTSDILFVCGGAFDGLGDIIKRRLGGNVLGFHGEKKGKSEEDALLKYVEPDDLISYGLIPELIGRLHMITTLSPISKEAMVEILTKPKNALIKQYQKIFEIDGATLHFEKDAIESIAELAIARKTGARGLRSIMEGAMIDLMYDLPELAGYEITISKECIMDKQSPLRVKKKRNIQKRA.

One can recognise a ClpX-type ZB domain in the interval 1 to 52 (MNEIKKRCSFCNKEESLDNPIINSGITPDVYICNYCLIVGSEILTGYLNKNP). The Zn(2+) site is built by Cys-8, Cys-11, Cys-33, and Cys-36. 129–136 (PTGSGKTL) serves as a coordination point for ATP.

This sequence belongs to the ClpX chaperone family. In terms of assembly, component of the ClpX-ClpP complex. Forms a hexameric ring that, in the presence of ATP, binds to fourteen ClpP subunits assembled into a disk-like structure with a central cavity, resembling the structure of eukaryotic proteasomes.

Functionally, ATP-dependent specificity component of the Clp protease. It directs the protease to specific substrates. Can perform chaperone functions in the absence of ClpP. This chain is ATP-dependent Clp protease ATP-binding subunit ClpX, found in Helicobacter hepaticus (strain ATCC 51449 / 3B1).